Consider the following 101-residue polypeptide: Small ribosomal subunit protein uS14 (101 aa).

The disordered stretch occupies residues 52–72; sequence PRDSSPVRQRRRCRSTGRPRG. Residues 59–72 show a composition bias toward basic residues; sequence RQRRRCRSTGRPRG.

It belongs to the universal ribosomal protein uS14 family. As to quaternary structure, part of the 30S ribosomal subunit. Contacts proteins S3 and S10.

Binds 16S rRNA, required for the assembly of 30S particles and may also be responsible for determining the conformation of the 16S rRNA at the A site. This chain is Small ribosomal subunit protein uS14, found in Nitrosococcus oceani (strain ATCC 19707 / BCRC 17464 / JCM 30415 / NCIMB 11848 / C-107).